Here is a 150-residue protein sequence, read N- to C-terminus: Large ribosomal subunit protein uL11 (150 aa).

This sequence belongs to the universal ribosomal protein uL11 family. Part of the ribosomal stalk of the 50S ribosomal subunit. Interacts with L10 and the large rRNA to form the base of the stalk. L10 forms an elongated spine to which L12 dimers bind in a sequential fashion forming a multimeric L10(L12)X complex. In terms of processing, one or more lysine residues are methylated.

Functionally, forms part of the ribosomal stalk which helps the ribosome interact with GTP-bound translation factors. This chain is Large ribosomal subunit protein uL11, found in Ureaplasma urealyticum serovar 10 (strain ATCC 33699 / Western).